The following is a 90-amino-acid chain: Succinate dehydrogenase subunit 7, mitochondrial (90 aa).

The N-terminal 41 residues, 1-41 (MAQPAFLSALRSRLRSPQPQAPALPHLQPPRRGFHVELGAR), are a transit peptide targeting the mitochondrion.

Component of complex II composed of eight subunits in plants: four classical SDH subunits SDH1, SDH2, SDH3 and SDH4 (a flavoprotein (FP), an iron-sulfur protein (IP), and a cytochrome b composed of a large and a small subunit.), as well as four subunits unknown in mitochondria from bacteria and heterotrophic eukaryotes.

The protein resides in the mitochondrion inner membrane. It participates in carbohydrate metabolism; tricarboxylic acid cycle. In Oryza sativa subsp. japonica (Rice), this protein is Succinate dehydrogenase subunit 7, mitochondrial.